The chain runs to 215 residues: Nucleoredoxin-like protein 1 (215 aa).

Positions 1–164 constitute a Thioredoxin; atypical domain; the sequence is MVDLFLGKVL…GAELIDRNFM (164 aa). The tract at residues 190-215 is disordered; it reads DEKKKKKKRDDDDDDDDGGGGGGPWG.

Belongs to the nucleoredoxin family.

The protein localises to the cell projection. It localises to the cilium. Its subcellular location is the photoreceptor outer segment. Its function is as follows. Plays an important role in retinal cone photoreceptor survival. May play a role in cone cell viability, slowing down cone degeneration, does not seem to play a role in degenerating rods. This Danio rerio (Zebrafish) protein is Nucleoredoxin-like protein 1 (nxnl1).